The following is a 239-amino-acid chain: TPR repeat-containing protein TP_0282 (239 aa).

A helical membrane pass occupies residues 21 to 43; the sequence is LLVGVLVAILGGLGLSAGCLLVM. 2 TPR repeats span residues 112–145 and 149–182; these read AYAQ…ARRS and GVYY…QDFP.

Its subcellular location is the cell membrane. In Treponema pallidum (strain Nichols), this protein is TPR repeat-containing protein TP_0282.